A 351-amino-acid chain; its full sequence is Formyl peptide receptor 2 (351 aa).

The Extracellular segment spans residues 1 to 29 (MESNYSIHLNGSEVVVYDSTISRVLWILS). N-linked (GlcNAc...) asparagine glycosylation is found at Asn4 and Asn10. Residues 30–50 (MVVVSITFFLGVLGNGLVIWV) form a helical membrane-spanning segment. Residues 51–61 (AGFRMPHTVTT) lie on the Cytoplasmic side of the membrane. A helical transmembrane segment spans residues 62 to 82 (IWYLNLALADFSFTATLPFLL). Over 83 to 99 (VEMAMKEKWPFGWFLCK) the chain is Extracellular. Cysteines 98 and 176 form a disulfide. Residues 100–120 (LVHIVVDVNLFGSVFLIALIA) traverse the membrane as a helical segment. Residues 121–144 (LDRCICVLHPVWAQNHRTVSLARK) lie on the Cytoplasmic side of the membrane. The chain crosses the membrane as a helical span at residues 145-165 (VVVGPWIFALILTLPIFIFLT). Residues 166-205 (TVRIPGGDVYCTFNFGSWAQTDEEKLNTAITFVTTRGIIR) are Extracellular-facing. Residues 206–226 (FLIGFSMPMSIVAVCYGLIAV) form a helical membrane-spanning segment. The Cytoplasmic segment spans residues 227–241 (KINRRNLVNSSRPLR). The helical transmembrane segment at 242–262 (VLTAVVASFFICWFPFQLVAL) threads the bilayer. The Extracellular segment spans residues 263–282 (LGTVWFKETLLSGSYKILDM). The helical transmembrane segment at 283-305 (FVNPTSSLAYFNSCLNPMLYVFM) threads the bilayer. Topologically, residues 306 to 351 (GQDFRERFIHSLPYSLERALSEDSGQTSDSSTSSTSPPADIELKAP) are cytoplasmic. The segment at 325–351 (LSEDSGQTSDSSTSSTSPPADIELKAP) is disordered. Positions 327–341 (EDSGQTSDSSTSSTS) are enriched in low complexity.

This sequence belongs to the G-protein coupled receptor 1 family. Interacts with Amyloid-beta protein 42, product of APP; the interaction takes place at the cell surface and the complex is then rapidly internalized. Primarily expressed in neutrophils. Not detected in vomeronasal neurons.

It localises to the cell membrane. In terms of biological role, high affinity receptor for N-formyl-methionyl peptides (FMLP), which are powerful neutrophil chemotactic factors. Stimulates chemotaxis in immune cells to site of infection or tissue damage upon recognition of several ligands, such as FMLP, or ligand involved in cell damage, disease or inflammation. Receptor for the chemokine-like protein FAM19A5, mediating FAM19A5-stimulated macrophage chemotaxis and the inhibitory effect on TNFSF11/RANKL-induced osteoclast differentiation. The polypeptide is Formyl peptide receptor 2 (Fpr2) (Mus musculus (Mouse)).